A 335-amino-acid chain; its full sequence is Erlin-2-A (335 aa).

The Cytoplasmic portion of the chain corresponds to 1–2 (MS). Residues 3-23 (HAGAIVGLGVALIAAALFSAI) form a helical membrane-spanning segment. At 24-335 (HKIEEGHVGV…GLDEAASAEE (312 aa)) the chain is on the lumenal side. An N-linked (GlcNAc...) asparagine glycan is attached at N106.

It belongs to the band 7/mec-2 family.

The protein resides in the endoplasmic reticulum membrane. Its function is as follows. Mediates the endoplasmic reticulum-associated degradation (ERAD) of inositol 1,4,5-trisphosphate receptors (IP3Rs). Promotes sterol-accelerated ERAD of HMGCR. Involved in regulation of cellular cholesterol homeostasis by regulation the SREBP signaling pathway. This Xenopus laevis (African clawed frog) protein is Erlin-2-A (erlin2-a).